We begin with the raw amino-acid sequence, 311 residues long: Methionyl-tRNA formyltransferase (311 aa).

110–113 (SLLP) provides a ligand contact to (6S)-5,6,7,8-tetrahydrofolate.

Belongs to the Fmt family.

It carries out the reaction L-methionyl-tRNA(fMet) + (6R)-10-formyltetrahydrofolate = N-formyl-L-methionyl-tRNA(fMet) + (6S)-5,6,7,8-tetrahydrofolate + H(+). In terms of biological role, attaches a formyl group to the free amino group of methionyl-tRNA(fMet). The formyl group appears to play a dual role in the initiator identity of N-formylmethionyl-tRNA by promoting its recognition by IF2 and preventing the misappropriation of this tRNA by the elongation apparatus. This is Methionyl-tRNA formyltransferase from Streptococcus pyogenes serotype M3 (strain ATCC BAA-595 / MGAS315).